We begin with the raw amino-acid sequence, 49 residues long: Small, acid-soluble spore protein O (49 aa).

A disordered region spans residues 24 to 49 (GYNEEFSNEPLTEAQRQNNKKRKKNQ).

Belongs to the SspO family.

The protein localises to the spore core. This chain is Small, acid-soluble spore protein O, found in Geobacillus kaustophilus (strain HTA426).